A 121-amino-acid chain; its full sequence is Large ribosomal subunit protein bL12 (121 aa).

This sequence belongs to the bacterial ribosomal protein bL12 family. As to quaternary structure, homodimer. Part of the ribosomal stalk of the 50S ribosomal subunit. Forms a multimeric L10(L12)X complex, where L10 forms an elongated spine to which 2 to 4 L12 dimers bind in a sequential fashion. Binds GTP-bound translation factors.

Its function is as follows. Forms part of the ribosomal stalk which helps the ribosome interact with GTP-bound translation factors. Is thus essential for accurate translation. The sequence is that of Large ribosomal subunit protein bL12 from Escherichia coli O81 (strain ED1a).